We begin with the raw amino-acid sequence, 159 residues long: Protein UXT homolog (159 aa).

Belongs to the UXT family.

The polypeptide is Protein UXT homolog (Nematostella vectensis (Starlet sea anemone)).